A 190-amino-acid chain; its full sequence is MVLVLALGDLHVPHRAADLPPKFKSMLVPGKIQHIICTGNLCIKEIHDYLKTICPDLHIVRGEFDEDARYPENKTLTIGQFKLGLCHGHQVIPWGDLDSLAMLQRQLGVDILVTGHTHQFTAYKHEGGVVINPGSATGAYSSINQDVNPSFVLMDIDGFRAVVYVYELIDGEVKVDKIEFKKPPTTSSGP.

The protein belongs to the VPS29 family. In terms of assembly, component of the retromer complex which consists of VPS29 (MAG1), VPS26 (VPS26A or VPS26B), VPS35 (VPS35A or VPS35B or VPS35C), VPS5/17 (SNX1 or SNX2A or SNX2B). Component of a retromer subcomplex consisting of VPS29 (MAG1), VPS26 (VPS26A or VPS26B), VPS35 (VPS35A or VPS35B or VPS35C).

It localises to the cytoplasm. The protein localises to the endosome membrane. The protein resides in the prevacuolar compartment membrane. Its subcellular location is the golgi apparatus. It is found in the trans-Golgi network membrane. It localises to the late endosome membrane. Plays a role in vesicular protein sorting. Component of the membrane-associated retromer complex which is essential in endosome-to-Golgi retrograde transport. Required for the auxin-carrier protein PIN2 sorting to the lytic vacuolar pathway and the PIN1 recycling to the plasma membrane, thus influencing auxin transport orientation. Also involved in the efficient sorting of seed storage proteins globulin 12S and albumin 2S. The VPS29-VPS26-VPS35 subcomplex may be involved in recycling of specific cargos from endosome to the plasma membrane. The sequence is that of Vacuolar protein sorting-associated protein 29 from Arabidopsis thaliana (Mouse-ear cress).